The chain runs to 140 residues: Nuclear receptor 2C2-associated protein (140 aa).

Belongs to the NR2C2AP family. As to quaternary structure, interacts with NR2C2/TR4.

Its subcellular location is the nucleus. Its function is as follows. May act as a repressor of NR2C2-mediated transactivation by suppressing the binding between NR2C2/TR4 and the TR4-response element in target genes. The chain is Nuclear receptor 2C2-associated protein (NR2C2AP) from Bos taurus (Bovine).